A 343-amino-acid polypeptide reads, in one-letter code: Putative mediator of RNA polymerase II transcription subunit 4 (343 aa).

The stretch at 86-125 (LKKLEKHQKIQKEITEIQKEIEEKDKLISTLALNLKDIES) forms a coiled coil. Residues 247 to 343 (ISSPFSIGGN…DEESEEVEWD (97 aa)) are disordered. Low complexity predominate over residues 271 to 316 (QQQQQQQQQPQQQLSQSQQSQQQTESELQPIQSILQPPQQLNIDLD). A compositionally biased stretch (acidic residues) spans 317-343 (LNPDLDSSGDDDDEDDDDEESEEVEWD).

This sequence belongs to the Mediator complex subunit 4 family. Component of the Mediator complex.

The protein localises to the nucleus. Functionally, component of the Mediator complex, a coactivator involved in the regulated transcription of nearly all RNA polymerase II-dependent genes. Mediator functions as a bridge to convey information from gene-specific regulatory proteins to the basal RNA polymerase II transcription machinery. Mediator is recruited to promoters by direct interactions with regulatory proteins and serves as a scaffold for the assembly of a functional preinitiation complex with RNA polymerase II and the general transcription factors. The sequence is that of Putative mediator of RNA polymerase II transcription subunit 4 (med4) from Dictyostelium discoideum (Social amoeba).